Consider the following 83-residue polypeptide: Small ribosomal subunit protein bS16 (83 aa).

The protein belongs to the bacterial ribosomal protein bS16 family.

This is Small ribosomal subunit protein bS16 from Shewanella amazonensis (strain ATCC BAA-1098 / SB2B).